We begin with the raw amino-acid sequence, 273 residues long: Putative deoxyribonuclease TATDN1 homolog (273 aa).

A divalent metal cation-binding residues include Glu91, His125, His147, and Asp195.

This sequence belongs to the metallo-dependent hydrolases superfamily. TatD-type hydrolase family. It depends on a divalent metal cation as a cofactor.

It localises to the nucleus. Putative deoxyribonuclease. This Encephalitozoon cuniculi (strain GB-M1) (Microsporidian parasite) protein is Putative deoxyribonuclease TATDN1 homolog.